We begin with the raw amino-acid sequence, 198 residues long: Protein GrpE (198 aa).

The span at 1-27 (MEERNEQVVEETKEAQTEEATIEKNSE) shows a compositional bias: basic and acidic residues. The tract at residues 1 to 39 (MEERNEQVVEETKEAQTEEATIEKNSEESVTEEATEETV) is disordered. Positions 29 to 39 (SVTEEATEETV) are enriched in acidic residues.

The protein belongs to the GrpE family. Homodimer.

The protein localises to the cytoplasm. Functionally, participates actively in the response to hyperosmotic and heat shock by preventing the aggregation of stress-denatured proteins, in association with DnaK and GrpE. It is the nucleotide exchange factor for DnaK and may function as a thermosensor. Unfolded proteins bind initially to DnaJ; upon interaction with the DnaJ-bound protein, DnaK hydrolyzes its bound ATP, resulting in the formation of a stable complex. GrpE releases ADP from DnaK; ATP binding to DnaK triggers the release of the substrate protein, thus completing the reaction cycle. Several rounds of ATP-dependent interactions between DnaJ, DnaK and GrpE are required for fully efficient folding. The chain is Protein GrpE from Bacillus cytotoxicus (strain DSM 22905 / CIP 110041 / 391-98 / NVH 391-98).